The primary structure comprises 364 residues: 4-hydroxy-3-methylbut-2-en-1-yl diphosphate synthase (flavodoxin) (364 aa).

Residues Cys268, Cys271, Cys303, and Glu310 each contribute to the [4Fe-4S] cluster site.

This sequence belongs to the IspG family. [4Fe-4S] cluster is required as a cofactor.

It carries out the reaction (2E)-4-hydroxy-3-methylbut-2-enyl diphosphate + oxidized [flavodoxin] + H2O + 2 H(+) = 2-C-methyl-D-erythritol 2,4-cyclic diphosphate + reduced [flavodoxin]. Its pathway is isoprenoid biosynthesis; isopentenyl diphosphate biosynthesis via DXP pathway; isopentenyl diphosphate from 1-deoxy-D-xylulose 5-phosphate: step 5/6. Converts 2C-methyl-D-erythritol 2,4-cyclodiphosphate (ME-2,4cPP) into 1-hydroxy-2-methyl-2-(E)-butenyl 4-diphosphate. The polypeptide is 4-hydroxy-3-methylbut-2-en-1-yl diphosphate synthase (flavodoxin) (Anoxybacillus flavithermus (strain DSM 21510 / WK1)).